A 447-amino-acid polypeptide reads, in one-letter code: UPF0210 protein OEOE_0945 (447 aa).

This sequence belongs to the UPF0210 family. Homodimer.

The protein is UPF0210 protein OEOE_0945 of Oenococcus oeni (strain ATCC BAA-331 / PSU-1).